The following is a 305-amino-acid chain: Methionyl-tRNA formyltransferase (305 aa).

110-113 (SLLP) provides a ligand contact to (6S)-5,6,7,8-tetrahydrofolate.

Belongs to the Fmt family.

The catalysed reaction is L-methionyl-tRNA(fMet) + (6R)-10-formyltetrahydrofolate = N-formyl-L-methionyl-tRNA(fMet) + (6S)-5,6,7,8-tetrahydrofolate + H(+). Functionally, attaches a formyl group to the free amino group of methionyl-tRNA(fMet). The formyl group appears to play a dual role in the initiator identity of N-formylmethionyl-tRNA by promoting its recognition by IF2 and preventing the misappropriation of this tRNA by the elongation apparatus. The chain is Methionyl-tRNA formyltransferase from Gluconacetobacter diazotrophicus (strain ATCC 49037 / DSM 5601 / CCUG 37298 / CIP 103539 / LMG 7603 / PAl5).